The following is a 916-amino-acid chain: Protein translocase subunit SecA (916 aa).

ATP-binding positions include Q88, 106 to 110, and D519; that span reads GEGKT. Residues C902, C904, C913, and C914 each contribute to the Zn(2+) site.

This sequence belongs to the SecA family. As to quaternary structure, monomer and homodimer. Part of the essential Sec protein translocation apparatus which comprises SecA, SecYEG and auxiliary proteins SecDF. Other proteins may also be involved. It depends on Zn(2+) as a cofactor.

Its subcellular location is the cell inner membrane. It is found in the cytoplasm. The catalysed reaction is ATP + H2O + cellular proteinSide 1 = ADP + phosphate + cellular proteinSide 2.. Part of the Sec protein translocase complex. Interacts with the SecYEG preprotein conducting channel. Has a central role in coupling the hydrolysis of ATP to the transfer of proteins into and across the cell membrane, serving as an ATP-driven molecular motor driving the stepwise translocation of polypeptide chains across the membrane. This is Protein translocase subunit SecA from Treponema pallidum (strain Nichols).